Consider the following 208-residue polypeptide: Small ribosomal subunit protein uS4 (208 aa).

Residues 98-163 (RRLDNVVYRL…KPRFIEIKEK (66 aa)) enclose the S4 RNA-binding domain.

Belongs to the universal ribosomal protein uS4 family. As to quaternary structure, part of the 30S ribosomal subunit. Contacts protein S5. The interaction surface between S4 and S5 is involved in control of translational fidelity.

Functionally, one of the primary rRNA binding proteins, it binds directly to 16S rRNA where it nucleates assembly of the body of the 30S subunit. With S5 and S12 plays an important role in translational accuracy. This is Small ribosomal subunit protein uS4 from Caldicellulosiruptor saccharolyticus (strain ATCC 43494 / DSM 8903 / Tp8T 6331).